The primary structure comprises 168 residues: uncharacterized protein (168 aa).

CBS domains follow at residues isoleucine 20 to leucine 77 and methionine 117 to isoleucine 168.

This is an uncharacterized protein from Methanocaldococcus jannaschii (strain ATCC 43067 / DSM 2661 / JAL-1 / JCM 10045 / NBRC 100440) (Methanococcus jannaschii).